The chain runs to 100 residues: UPF0213 protein YhbQ (100 aa).

The GIY-YIG domain occupies 2–77 (TPWFLYLIRT…KQLTKRQKER (76 aa)).

The protein belongs to the UPF0213 family.

This is UPF0213 protein YhbQ from Escherichia coli O157:H7.